Here is a 194-residue protein sequence, read N- to C-terminus: CD-NTase-associated protein 15 (194 aa).

Residues 1–73 (MRMWELLPSK…DYLKHKFCPD (73 aa)) form a required for cell toxicity region. A run of 2 helical transmembrane segments spans residues 15 to 35 (ISTI…GQPV) and 43 to 63 (ITTI…YFYI).

The protein belongs to the CBASS Cap15 membrane effector family. As to quaternary structure, the beta barrel domain oligomerizes; in the presence of cyclic nucleotides (probably 3',3'-cGAMP, but the cognate CD-NTase makes at least 4 other cyclic nucleotides) higher-level oligomers are detected.

Its subcellular location is the cell inner membrane. Functionally, effector protein of a CBASS antivirus system. CBASS (cyclic oligonucleotide-based antiphage signaling system) provides immunity against bacteriophages. The CD-NTase protein (CdnB) synthesizes cyclic nucleotides in response to infection; these serve as specific second messenger signals. The signals activate a diverse range of effectors, leading to bacterial cell death and thus abortive phage infection. Causes cell death in response to 3',3'-cGAMP upon coexpression in E.coli with V.cholerae DncV; inactivating DncV prevents cell death. Upon induction in E.coli with non-cognate DncV, the cell inner membrane shrinks and separates from the cell wall with a concomitant increase in the periplasm. Binds cyclic nucleotide second messenger 3',3'-cGAMP, probably oligomerizing, and induces cell membrane shrinkage and rupture, leading to cell death. A type I CBASS system. Protects E.coli against phage infection. When the CBASS operon (cdnB-cap15) is introduced in E.coli MG1655 there is about 100-fold protection against phage T2 and about 10-fold protection against phage T5 and T6. The sequence is that of CD-NTase-associated protein 15 from Escherichia albertii.